We begin with the raw amino-acid sequence, 225 residues long: C-reactive protein (225 aa).

Positions 1–20 are cleaved as a signal peptide; it reads MEKLLWCFLTLVSFSNMSDQ. The 202-residue stretch at 24 to 225 folds into the Pentraxin (PTX) domain; that stretch reads HKKAFVFPKE…EVHVKPQLWP (202 aa). C55 and C116 are joined by a disulfide. Residues N80, Q158, D159, and Q169 each coordinate Ca(2+).

The protein belongs to the pentraxin family. As to quaternary structure, homopentamer. Pentraxin (or pentaxin) have a discoid arrangement of 5 non-covalently bound subunits. Interacts with FCN1; may regulate monocyte activation by FCN1. Ca(2+) serves as cofactor. Found in plasma.

It is found in the secreted. Its function is as follows. Displays several functions associated with host defense: it promotes agglutination, bacterial capsular swelling, phagocytosis and complement fixation through its calcium-dependent binding to phosphorylcholine. Can interact with DNA and histones and may scavenge nuclear material released from damaged circulating cells. The sequence is that of C-reactive protein (CRP) from Oryctolagus cuniculus (Rabbit).